We begin with the raw amino-acid sequence, 311 residues long: Methionyl-tRNA formyltransferase (311 aa).

109-112 (SLLP) lines the (6S)-5,6,7,8-tetrahydrofolate pocket.

The protein belongs to the Fmt family.

The catalysed reaction is L-methionyl-tRNA(fMet) + (6R)-10-formyltetrahydrofolate = N-formyl-L-methionyl-tRNA(fMet) + (6S)-5,6,7,8-tetrahydrofolate + H(+). In terms of biological role, attaches a formyl group to the free amino group of methionyl-tRNA(fMet). The formyl group appears to play a dual role in the initiator identity of N-formylmethionyl-tRNA by promoting its recognition by IF2 and preventing the misappropriation of this tRNA by the elongation apparatus. This Kosmotoga olearia (strain ATCC BAA-1733 / DSM 21960 / TBF 19.5.1) protein is Methionyl-tRNA formyltransferase.